The chain runs to 364 residues: Spermidine/putrescine import ATP-binding protein PotA (364 aa).

Residues 5 to 235 (LSFKGVTKGF…PVNRFVADFI (231 aa)) form the ABC transporter domain. 37–44 (GPSGCGKT) lines the ATP pocket.

It belongs to the ABC transporter superfamily. Spermidine/putrescine importer (TC 3.A.1.11.1) family. In terms of assembly, the complex is composed of two ATP-binding proteins (PotA), two transmembrane proteins (PotB and PotC) and a solute-binding protein (PotD).

Its subcellular location is the cell membrane. It carries out the reaction ATP + H2O + polyamine-[polyamine-binding protein]Side 1 = ADP + phosphate + polyamineSide 2 + [polyamine-binding protein]Side 1.. In terms of biological role, part of the ABC transporter complex PotABCD involved in spermidine/putrescine import. Responsible for energy coupling to the transport system. This chain is Spermidine/putrescine import ATP-binding protein PotA, found in Staphylococcus haemolyticus (strain JCSC1435).